We begin with the raw amino-acid sequence, 355 residues long: Probable dual-specificity RNA methyltransferase RlmN (355 aa).

Catalysis depends on Glu92, which acts as the Proton acceptor. The Radical SAM core domain maps to 98–330 (FHYGLSVCVT…TELGINCGVR (233 aa)). A disulfide bond links Cys105 and Cys341. Positions 112, 116, and 119 each coordinate [4Fe-4S] cluster. S-adenosyl-L-methionine-binding positions include 164 to 165 (GE), Ser196, 219 to 221 (SLH), and Asn297. Cys341 (S-methylcysteine intermediate) is an active-site residue.

The protein belongs to the radical SAM superfamily. RlmN family. Requires [4Fe-4S] cluster as cofactor.

The protein resides in the cytoplasm. It carries out the reaction adenosine(2503) in 23S rRNA + 2 reduced [2Fe-2S]-[ferredoxin] + 2 S-adenosyl-L-methionine = 2-methyladenosine(2503) in 23S rRNA + 5'-deoxyadenosine + L-methionine + 2 oxidized [2Fe-2S]-[ferredoxin] + S-adenosyl-L-homocysteine. The enzyme catalyses adenosine(37) in tRNA + 2 reduced [2Fe-2S]-[ferredoxin] + 2 S-adenosyl-L-methionine = 2-methyladenosine(37) in tRNA + 5'-deoxyadenosine + L-methionine + 2 oxidized [2Fe-2S]-[ferredoxin] + S-adenosyl-L-homocysteine. Its function is as follows. Specifically methylates position 2 of adenine 2503 in 23S rRNA and position 2 of adenine 37 in tRNAs. The polypeptide is Probable dual-specificity RNA methyltransferase RlmN (Oceanobacillus iheyensis (strain DSM 14371 / CIP 107618 / JCM 11309 / KCTC 3954 / HTE831)).